A 353-amino-acid chain; its full sequence is MEKVKVIIMGLGAMGGGMADMLLKKQGVEIVGVVGRGKMLGTSMYDHISTPRGDREDVIVGAMEDVITEKAADVVLLCTDSFTRKAFDKIKFIVEKKINVISSAEEMAYPMAQEPELAKEIDRLAKENGVSVLGTGINPGLIMDLLVILMTGCCEEVHSILSRRVNSLSPFGPAVMEEQGIGITVEEFNKGVQEGTLAGHVGFHESIGMIADAIGWKLSAPITQSMEPIVTDVDRKSPYGFAKAGNVAGCAMKGFGYVDGELKIEMDHPQQIEPEQVGVQTGDYVIINGVPNINMVNSPEVPGGIGTIAMCVNMIPQIINARPGLHTMIDLPVPRAIMGDFRDLISEEAKIVK.

The protein belongs to the DapB family. In terms of assembly, homodimer.

The enzyme catalyses (2R,4S)-2,4-diaminopentanoate + NAD(+) + H2O = (2R)-2-amino-4-oxopentanoate + NH4(+) + NADH + H(+). The catalysed reaction is (2R,4S)-2,4-diaminopentanoate + NADP(+) + H2O = (2R)-2-amino-4-oxopentanoate + NH4(+) + NADPH + H(+). Inhibited by p-chloromercuribenzoate, iodoacetate and N-ethylmaleimide. In terms of biological role, involved in the ornithine fermentation pathway. Catalyzes the oxidative deamination of (2R,4S)-2,4-diaminopentanoate (DAP) to yield 2-amino-4-ketopentanoate (AKP). The protein is 2,4-diaminopentanoate dehydrogenase of Acetoanaerobium sticklandii (strain ATCC 12662 / DSM 519 / JCM 1433 / CCUG 9281 / NCIMB 10654 / HF) (Clostridium sticklandii).